The chain runs to 777 residues: Intraflagellar transport protein 80 homolog (777 aa).

7 WD repeats span residues 12 to 50, 104 to 143, 145 to 185, 186 to 225, 227 to 265, 267 to 306, and 504 to 542; these read KHQE…TSLI, AHCG…RSTL, QQGT…LQWK, AHDG…LYGS, PHEH…YALE, PNTG…WEWK, and KLGT…YVDR.

Component of the IFT complex B, at least composed of IFT20, IFT22, IFT25, IFT27, IFT46, IFT52, TRAF3IP1/IFT54, IFT57, IFT74, IFT80, IFT81, and IFT88. Interacts with IFT88. Interacts with IFT57 and IFT70B.

The protein resides in the cytoplasm. It is found in the cytoskeleton. The protein localises to the cilium basal body. Its subcellular location is the cilium axoneme. Its function is as follows. Component of the intraflagellar transport (IFT) complex B, which is essential for the development and maintenance of motile and sensory cilia. In Mus musculus (Mouse), this protein is Intraflagellar transport protein 80 homolog (Ift80).